The following is a 305-amino-acid chain: Nucleotide-binding protein Saro_2904 (305 aa).

15–22 (GLLGAGKT) lines the ATP pocket. Residue 68-71 (DTRT) participates in GTP binding.

Belongs to the RapZ-like family.

Displays ATPase and GTPase activities. This Novosphingobium aromaticivorans (strain ATCC 700278 / DSM 12444 / CCUG 56034 / CIP 105152 / NBRC 16084 / F199) protein is Nucleotide-binding protein Saro_2904.